The primary structure comprises 113 residues: Large ribosomal subunit protein bL19 (113 aa).

Belongs to the bacterial ribosomal protein bL19 family.

Functionally, this protein is located at the 30S-50S ribosomal subunit interface and may play a role in the structure and function of the aminoacyl-tRNA binding site. The protein is Large ribosomal subunit protein bL19 of Corynebacterium glutamicum (strain R).